The sequence spans 544 residues: Lariat debranching enzyme (544 aa).

Residues Cys-8, His-10, Asp-39, and Asn-84 each coordinate a divalent metal cation. The lariat recognition loop stretch occupies residues 124–154 (SGIFKSHDYRKGHFECPPYNSSTIRSIYHVR). Lys-128 carries the post-translational modification N6-acetyllysine. His-174, His-226, and His-228 together coordinate a divalent metal cation. Acidic residues predominate over residues 395–412 (EYEEQDDVESNDSGEDQS). The interval 395–463 (EYEEQDDVES…PSDQASEFSA (69 aa)) is disordered. Over residues 413–425 (EYNTDTSALSSIN) the composition is skewed to polar residues. The segment covering 429–439 (IMLDEEEDEDS) has biased composition (acidic residues). Positions 445-463 (SGMNTPSVEPSDQASEFSA) are enriched in polar residues. 7 positions are modified to phosphoserine: Ser-464, Ser-474, Ser-478, Ser-479, Ser-485, Ser-499, and Ser-514. The tract at residues 476–544 (IVSSDDTVDS…AVDDDDDDAA (69 aa)) is disordered. The span at 512-522 (RLSDEHEPEQR) shows a compositional bias: basic and acidic residues.

It belongs to the lariat debranching enzyme family. Fe(2+) is required as a cofactor. Requires Zn(2+) as cofactor. It depends on Mn(2+) as a cofactor. In terms of tissue distribution, ubiquitously expressed, strongest expression in the spinal cord and brainstem.

Its subcellular location is the nucleus. Its activity is regulated as follows. Active in presence of diverse metals including Fe(2+), Zn(2+), Mn(2+). Also activated by Ca(2+). Binds two metal cations in two adjacent alpha and beta metal-binding pockets. In terms of biological role, cleaves the 2'-5' phosphodiester linkage at the branch point of excised lariat intron RNA and converts them into linear molecules that can be subsequently degraded, thereby facilitating ribonucleotide turnover. Linked to its role in pre-mRNA processing mechanism, may also participate in retrovirus replication via an RNA lariat intermediate in cDNA synthesis and have an antiviral cell-intrinsic defense function in the brainstem. This chain is Lariat debranching enzyme (DBR1), found in Homo sapiens (Human).